Reading from the N-terminus, the 58-residue chain is MLKWALFFAVVAVIAGVLGFTGVAAGAAAIAKFLFIVFVILCVVFLVLGFVVTKKIVD.

Transmembrane regions (helical) follow at residues 4–24 (WALFFAVVAVIAGVLGFTGVA) and 33–53 (FLFIVFVILCVVFLVLGFVVT).

This sequence belongs to the UPF0391 family.

The protein localises to the cell membrane. The sequence is that of UPF0391 membrane protein Bxeno_A2959 from Paraburkholderia xenovorans (strain LB400).